The following is an 81-amino-acid chain: D-alanyl carrier protein (81 aa).

Residues 1 to 81 (MADEAIKNGV…KIIAKVEQAQ (81 aa)) form the Carrier domain. Residue Ser39 is modified to O-(pantetheine 4'-phosphoryl)serine.

Belongs to the DltC family. 4'-phosphopantetheine is transferred from CoA to a specific serine of apo-DCP.

It localises to the cytoplasm. It participates in cell wall biogenesis; lipoteichoic acid biosynthesis. Functionally, carrier protein involved in the D-alanylation of lipoteichoic acid (LTA). The loading of thioester-linked D-alanine onto DltC is catalyzed by D-alanine--D-alanyl carrier protein ligase DltA. The DltC-carried D-alanyl group is further transferred to cell membrane phosphatidylglycerol (PG) by forming an ester bond, probably catalyzed by DltD. D-alanylation of LTA plays an important role in modulating the properties of the cell wall in Gram-positive bacteria, influencing the net charge of the cell wall. This Lacticaseibacillus rhamnosus (Lactobacillus rhamnosus) protein is D-alanyl carrier protein.